Consider the following 214-residue polypeptide: Peptide methionine sulfoxide reductase B1, chloroplastic (214 aa).

The transit peptide at M1–R53 directs the protein to the chloroplast. A compositionally biased stretch (low complexity) spans A58 to G81. Positions A58–D91 are disordered. One can recognise a MsrB domain in the interval D91–T213. Residues C130, C133, C179, and C182 each coordinate Zn(2+). The Nucleophile role is filled by C202.

It belongs to the MsrB Met sulfoxide reductase family. It depends on Zn(2+) as a cofactor. In terms of tissue distribution, expressed in leaves and flowers.

It localises to the plastid. The protein resides in the chloroplast. The enzyme catalyses L-methionyl-[protein] + [thioredoxin]-disulfide + H2O = L-methionyl-(R)-S-oxide-[protein] + [thioredoxin]-dithiol. Functionally, catalyzes the reduction of methionine sulfoxide (MetSO) to methionine in proteins. Involved in abiotic stress response. Plays a protective role against oxidative stress by restoring activity to proteins that have been inactivated by methionine oxidation. MSRB family specifically reduces the MetSO R-enantiomer. The polypeptide is Peptide methionine sulfoxide reductase B1, chloroplastic (Oryza sativa subsp. japonica (Rice)).